Here is an 805-residue protein sequence, read N- to C-terminus: Kinesin-like protein KIP3 (805 aa).

Residues 10-438 (SIVVAIRVRP…LKYANRAKEI (429 aa)) form the Kinesin motor domain. Residue 192-199 (GATGCGKT) participates in ATP binding. Residues 449–481 (LSRHVGSYLKMITEQKRQIEELREREEKMISLK) are a coiled coil. A disordered region spans residues 720–805 (NFSQKKVKWT…HQSLLATARK (86 aa)). Residues 764-773 (MQDTTFNEQG) are compositionally biased toward polar residues. Residues 774-783 (PSTPSAPTTA) show a composition bias toward low complexity. Over residues 792 to 805 (SLLTHQSLLATARK) the composition is skewed to polar residues.

It belongs to the TRAFAC class myosin-kinesin ATPase superfamily. Kinesin family. Kinesin II subfamily.

The protein localises to the cytoplasm. It is found in the cytoskeleton. The chain is Kinesin-like protein KIP3 (KIP3) from Saccharomyces cerevisiae (strain ATCC 204508 / S288c) (Baker's yeast).